The chain runs to 239 residues: MALLGVNVDHVATIRQARGTNEPDPVTAAALAELAGADGITIHLREDRRHIQDRDVELIRQTVKTRLNLEMAATDEMVGIALKVRPDAVTLVPEKRKELTTEGGLNVALLRQTLKKHIDLLKQGGISVSLFIDPDLEQVKASHRIGADAIEIHTGAYCDAACAATRSKELDKLTNAVKAGNKLGLLVHAGHGLTYFNIQPVAAIGGIREFNIGHSIISRAVLVGMDRAVREMKDLVGGA.

Asparagine 7 contacts 3-amino-2-oxopropyl phosphate. 9-10 contributes to the 1-deoxy-D-xylulose 5-phosphate binding site; the sequence is DH. Arginine 18 contacts 3-amino-2-oxopropyl phosphate. Histidine 43 functions as the Proton acceptor in the catalytic mechanism. 1-deoxy-D-xylulose 5-phosphate-binding residues include arginine 45 and histidine 50. Glutamate 70 (proton acceptor) is an active-site residue. Threonine 100 contacts 1-deoxy-D-xylulose 5-phosphate. Residue histidine 191 is the Proton donor of the active site. 3-amino-2-oxopropyl phosphate-binding positions include glycine 192 and 213–214; that span reads GH.

It belongs to the PNP synthase family. As to quaternary structure, homooctamer; tetramer of dimers.

The protein localises to the cytoplasm. It catalyses the reaction 3-amino-2-oxopropyl phosphate + 1-deoxy-D-xylulose 5-phosphate = pyridoxine 5'-phosphate + phosphate + 2 H2O + H(+). It participates in cofactor biosynthesis; pyridoxine 5'-phosphate biosynthesis; pyridoxine 5'-phosphate from D-erythrose 4-phosphate: step 5/5. In terms of biological role, catalyzes the complicated ring closure reaction between the two acyclic compounds 1-deoxy-D-xylulose-5-phosphate (DXP) and 3-amino-2-oxopropyl phosphate (1-amino-acetone-3-phosphate or AAP) to form pyridoxine 5'-phosphate (PNP) and inorganic phosphate. This Syntrophotalea carbinolica (strain DSM 2380 / NBRC 103641 / GraBd1) (Pelobacter carbinolicus) protein is Pyridoxine 5'-phosphate synthase.